The sequence spans 201 residues: Recombination protein RecR (201 aa).

The segment at C57–C72 adopts a C4-type zinc-finger fold. Positions G81 to P176 constitute a Toprim domain.

Belongs to the RecR family.

In terms of biological role, may play a role in DNA repair. It seems to be involved in an RecBC-independent recombinational process of DNA repair. It may act with RecF and RecO. The protein is Recombination protein RecR of Shigella boydii serotype 4 (strain Sb227).